Here is a 374-residue protein sequence, read N- to C-terminus: Serine/threonine-protein kinase-transforming protein mos (374 aa).

Positions 94-370 constitute a Protein kinase domain; sequence VCLMHRLGSG…LLQRDLKAFR (277 aa). ATP is bound by residues 100-108 and Lys121; that span reads LGSGGFGSV. Asp229 functions as the Proton acceptor in the catalytic mechanism.

It belongs to the protein kinase superfamily. Ser/Thr protein kinase family.

The catalysed reaction is L-seryl-[protein] + ATP = O-phospho-L-seryl-[protein] + ADP + H(+). The enzyme catalyses L-threonyl-[protein] + ATP = O-phospho-L-threonyl-[protein] + ADP + H(+). This Mus musculus (Mouse) protein is Serine/threonine-protein kinase-transforming protein mos (V-MOS).